We begin with the raw amino-acid sequence, 524 residues long: Solute carrier family 35 member F5 (524 aa).

Positions 1–22 are disordered; sequence MVPPRHHPGAGRPGALSSSPPF. Residues 13-22 show a composition bias toward low complexity; the sequence is PGALSSSPPF. Helical transmembrane passes span 69-89 and 101-121; these read MALGIVILLLVDVIWVASSEL and FFSTFAKTSMFVLYLLGFIVW. A Phosphoserine modification is found at S207. Transmembrane regions (helical) follow at residues 244 to 264, 269 to 289, 297 to 317, 328 to 348, 362 to 382, 396 to 416, 421 to 441, and 453 to 473; these read ISFFFCFVWFLANFSYQEALS, AIVNILSSTSGLFTLILAAMF, FTLSKLLAVILSIGGVVLVNL, TIGSIWSLVGAMLYAVYIVMI, MFFGFVGLFNLLLLWPGFFLL, VVLMCIVINGLIGTVLSEFLW, FLTSSLIGTLALSLTIPLSII, and WLFFAGAIPVFFSFFIATLLC. The EamA domain occupies 253 to 317; it reads FLANFSYQEA…SIGGVVLVNL (65 aa).

Belongs to the SLC35F solute transporter family.

Its subcellular location is the membrane. Its function is as follows. Putative solute transporter. The sequence is that of Solute carrier family 35 member F5 (SLC35F5) from Bos taurus (Bovine).